The sequence spans 194 residues: FAD-linked sulfhydryl oxidase ERV1 (194 aa).

The segment at 44–72 (LSLSLSPPPTPPSPPPPPPEVLKKDSKAA) is disordered. Residues 49–63 (SPPPTPPSPPPPPPE) are compositionally biased toward pro residues. In terms of domain architecture, ERV/ALR sulfhydryl oxidase spans 72–172 (APLTKEEVGR…FPCQRVNARW (101 aa)). Residues Lys76, Arg81, Trp84, Glu121, His125, Cys148, His151, Asn152, Asn155, Lys160, and Arg171 each contribute to the FAD site. A disulfide bond links Cys119 and Cys122. A disulfide bridge links Cys148 with Cys165. Cys177 and Cys182 are disulfide-bonded. The short motif at 177–182 (CPERSC) is the Required for dimerization and substrate specificity element.

As to quaternary structure, homodimer. The cofactor is FAD. In terms of processing, contains three disulfide bonds; one catalytic disulfide (Cys-119 to Cys-122), one structural disulfide (Cys-148 to Cys-165), and one shuttle disulfide (Cys-177 to Cys-182).

The protein localises to the mitochondrion. It carries out the reaction 2 R'C(R)SH + O2 = R'C(R)S-S(R)CR' + H2O2. Functionally, FAD-dependent sulfhydryl oxidase that catalyzes disulfide bond formation. Oxidizes thioredoxin in vitro. Required for the import and folding of small cysteine-containing proteins in the mitochondrial intermembrane space, and can act independently of the oxidoreductase MIA40. Can oxidize the cytochrome c oxidase assembly protein COX19, a typical substrate of MIA40. The polypeptide is FAD-linked sulfhydryl oxidase ERV1 (Oryza sativa subsp. japonica (Rice)).